Here is a 301-residue protein sequence, read N- to C-terminus: Beta carbonic anhydrase 5, chloroplastic (301 aa).

A chloroplast-targeting transit peptide spans 1–56 (MAATPTHFSVSHDPFSSTSLLNLQTQAIFGPNHSLKTTQLRIPASFRRKATNLQVM). Threonine 65 is modified (phosphothreonine). Position 128 is a phosphoserine (serine 128). Cysteine 231 is modified (S-nitrosocysteine).

This sequence belongs to the beta-class carbonic anhydrase family. Strongly expressed in aerial tissues including leaves, stems, flowers and siliques.

It is found in the plastid. Its subcellular location is the chloroplast. The enzyme catalyses hydrogencarbonate + H(+) = CO2 + H2O. Reversible hydration of carbon dioxide. This Arabidopsis thaliana (Mouse-ear cress) protein is Beta carbonic anhydrase 5, chloroplastic (BCA5).